A 260-amino-acid polypeptide reads, in one-letter code: UPF0246 protein APJL_0596 (260 aa).

It belongs to the UPF0246 family.

The polypeptide is UPF0246 protein APJL_0596 (Actinobacillus pleuropneumoniae serotype 3 (strain JL03)).